Consider the following 151-residue polypeptide: Transcription elongation factor Spt5 (151 aa).

In terms of domain architecture, KOW spans 98–128; the sequence is PGQVVEIVAGAFKGMKARVIDVNQSKGQVTV.

It belongs to the archaeal Spt5 family. Heterodimer composed of Spt4 and Spt5. Interacts with RNA polymerase (RNAP).

In terms of biological role, stimulates transcription elongation. The sequence is that of Transcription elongation factor Spt5 from Aeropyrum pernix (strain ATCC 700893 / DSM 11879 / JCM 9820 / NBRC 100138 / K1).